We begin with the raw amino-acid sequence, 152 residues long: Transcriptional repressor NrdR (152 aa).

Residues 3–34 fold into a zinc finger; sequence CPYCNASDTKVIDSRLAAEGAQVRRRRSCNSC. An ATP-cone domain is found at 49–139; it reads PRIIKSSGKI…VYRDFQDIDA (91 aa).

Belongs to the NrdR family. Zn(2+) serves as cofactor.

In terms of biological role, negatively regulates transcription of bacterial ribonucleotide reductase nrd genes and operons by binding to NrdR-boxes. This chain is Transcriptional repressor NrdR, found in Psychrobacter arcticus (strain DSM 17307 / VKM B-2377 / 273-4).